Reading from the N-terminus, the 899-residue chain is Translation initiation factor IF-2 (899 aa).

Disordered stretches follow at residues 31 to 227 and 240 to 310; these read KKAE…ATEQ and VTTS…GFDK. Polar residues-rich tracts occupy residues 36–47 and 73–87; these read NVSQTEKQSLLS and STLS…SKSV. Basic and acidic residues-rich tracts occupy residues 101 to 173, 181 to 219, and 247 to 261; these read SALE…EKAK, AKSE…ETNE, and RAAE…ETTG. Positions 296 to 308 are enriched in polar residues; sequence PQVNAPTSMQQGF. The tr-type G domain maps to 398–565; the sequence is SRAPVVTIMG…AILLQSEILE (168 aa). Residues 407–414 form a G1 region; it reads GHVDHGKT. 407–414 serves as a coordination point for GTP; sequence GHVDHGKT. The interval 432 to 436 is G2; it reads GITQH. Residues 453–456 are G3; it reads DTPG. GTP is bound by residues 453–457 and 507–510; these read DTPGH and NKID. Residues 507-510 form a G4 region; sequence NKID. A G5 region spans residues 543–545; sequence SAK.

This sequence belongs to the TRAFAC class translation factor GTPase superfamily. Classic translation factor GTPase family. IF-2 subfamily.

It localises to the cytoplasm. Functionally, one of the essential components for the initiation of protein synthesis. Protects formylmethionyl-tRNA from spontaneous hydrolysis and promotes its binding to the 30S ribosomal subunits. Also involved in the hydrolysis of GTP during the formation of the 70S ribosomal complex. The chain is Translation initiation factor IF-2 from Photobacterium profundum (strain SS9).